The sequence spans 208 residues: Glutathione S-transferase 2 (208 aa).

Residues 1–78 (MSYKLTYFSI…HLARKYNLNG (78 aa)) enclose the GST N-terminal domain. Residues tyrosine 7, lysine 42, 49 to 50 (QL), and 62 to 63 (QS) contribute to the glutathione site. Residues 80-200 (NEMETTYIDM…YCEKRDAAKV (121 aa)) form the GST C-terminal domain.

It belongs to the GST superfamily. Pi family. In terms of assembly, homodimer. In terms of tissue distribution, hypodermis, wall of the seminal receptacle and spermatozoa of adult worms.

It carries out the reaction RX + glutathione = an S-substituted glutathione + a halide anion + H(+). Its function is as follows. Appears to play a central role in the parasite detoxification system. The chain is Glutathione S-transferase 2 (GST2) from Onchocerca volvulus.